A 207-amino-acid chain; its full sequence is Protein 6b (207 aa).

A disordered region spans residues 161 to 185; it reads NTLEEGEDDDDEMDDEGEAGGAEPR. The span at 164–178 shows a compositional bias: acidic residues; that stretch reads EEGEDDDDEMDDEGE.

Its function is as follows. Involved in tumor formation and increases auxin and cytokinin effects in host plants. This Agrobacterium tumefaciens (strain 15955) protein is Protein 6b (6b).